A 296-amino-acid polypeptide reads, in one-letter code: MVRPHLPLNALRAFEASARHLSFTRAAIELCVTQAAVSHQVKSLEERLGVALFKRLPRGLMLTHEGESLLPVLCDSFDRIAGLLERFEGGHYRDVLTVGAVGTFTVGWLLPRLEDFQARHPFIDLRLSTHNNRVDIAAEGLDYAIRFGGGAWHGTEALALFEAPLTVLCCPEVAAQLHSPADLLQHTLLRSYRADEWPLWFQAAGLPAHAPLTRSIVFDTSLAMLEAARQGVGVALAPAAMFARQLASESIRRPFATEVSTGSYWLTRLQSRGETSAMLAFRGWLLEMAAVEARGR.

The 58-residue stretch at 6 to 63 (LPLNALRAFEASARHLSFTRAAIELCVTQAAVSHQVKSLEERLGVALFKRLPRGLMLT) folds into the HTH lysR-type domain. Positions 23-42 (FTRAAIELCVTQAAVSHQVK) form a DNA-binding region, H-T-H motif. The includes the LysR substrate-binding / effector-binding domain, involved in binding to specific cell-wall-derived muropeptide products, some of which have signaling functions, leading to disparate responses such as antibiotic resistance, virulence, and host cell inflammation stretch occupies residues 83 to 296 (LLERFEGGHY…EMAAVEARGR (214 aa)). The region spanning 91-289 (HYRDVLTVGA…AFRGWLLEMA (199 aa)) is the LysR substrate-binding domain.

It belongs to the LysR transcriptional regulatory family. Homodimer.

The protein resides in the cytoplasm. It is found in the membrane. In terms of biological role, transcription regulator that plays a critical role in the expression of beta-lactamase AmpC, acting by positive regulation of the ampC gene. Has a wider role in the regulation of expression of genes involved in proteolysis, quorum sensing, and virulence. Acts by binding directly to the promoter region of the ampC gene. Probably does not regulate transcription of its own gene. In Pseudomonas aeruginosa (strain ATCC 15692 / DSM 22644 / CIP 104116 / JCM 14847 / LMG 12228 / 1C / PRS 101 / PAO1), this protein is HTH-type transcriptional activator AmpR (ampR).